We begin with the raw amino-acid sequence, 353 residues long: S-adenosylmethionine:tRNA ribosyltransferase-isomerase (353 aa).

Belongs to the QueA family. Monomer.

It localises to the cytoplasm. It carries out the reaction 7-aminomethyl-7-carbaguanosine(34) in tRNA + S-adenosyl-L-methionine = epoxyqueuosine(34) in tRNA + adenine + L-methionine + 2 H(+). The protein operates within tRNA modification; tRNA-queuosine biosynthesis. Transfers and isomerizes the ribose moiety from AdoMet to the 7-aminomethyl group of 7-deazaguanine (preQ1-tRNA) to give epoxyqueuosine (oQ-tRNA). In Rickettsia bellii (strain OSU 85-389), this protein is S-adenosylmethionine:tRNA ribosyltransferase-isomerase.